Here is a 146-residue protein sequence, read N- to C-terminus: Microsomal glutathione S-transferase 2 (146 aa).

3 consecutive transmembrane segments (helical) span residues 6 to 26 (ILLAALSVLSACQQSYFAMQV), 59 to 79 (FYPIFIITLWMAGWYFNQVFA), and 111 to 131 (SLGVLALLTVLGAVGILNSFL).

Belongs to the MAPEG family. In terms of assembly, homotrimer.

The protein resides in the endoplasmic reticulum membrane. It localises to the microsome membrane. It carries out the reaction RX + glutathione = an S-substituted glutathione + a halide anion + H(+). The catalysed reaction is 1-chloro-2,4-dinitrobenzene + glutathione = 2,4-dinitrophenyl-S-glutathione + chloride + H(+). The enzyme catalyses leukotriene C4 = leukotriene A4 + glutathione. It catalyses the reaction (5S)-hydroperoxy-(6E,8Z,11Z,14Z)-eicosatetraenoate + 2 glutathione = (5S)-hydroxy-(6E,8Z,11Z,14Z)-eicosatetraenoate + glutathione disulfide + H2O. Each monomer binds on GSH molecule but only one subunit is catalytically active. In terms of biological role, catalyzes several different glutathione-dependent reactions. Catalyzes the glutathione-dependent reduction of lipid hydroperoxides, such as 5-HPETE. Has glutathione transferase activity, toward xenobiotic electrophiles, such as 1-chloro-2, 4-dinitrobenzene (CDNB). Also catalyzes the conjugation of leukotriene A4 with reduced glutathione to form leukotriene C4 (LTC4). Involved in oxidative DNA damage induced by ER stress and anticancer agents by activating LTC4 biosynthetic machinery in nonimmune cells. The chain is Microsomal glutathione S-transferase 2 (MGST2) from Bos taurus (Bovine).